The chain runs to 740 residues: Ion-translocating oxidoreductase complex subunit C (740 aa).

4Fe-4S ferredoxin-type domains follow at residues 369–397 and 407–436; these read GEPQ…QQLY and KATT…VQYF. [4Fe-4S] cluster contacts are provided by Cys-377, Cys-380, Cys-383, Cys-387, Cys-416, Cys-419, Cys-422, and Cys-426. Residues 598-716 are disordered; that stretch reads AKARKLEQQQ…EPEEQVDPRK (119 aa).

The protein belongs to the 4Fe4S bacterial-type ferredoxin family. RnfC subfamily. In terms of assembly, the complex is composed of six subunits: RsxA, RsxB, RsxC, RsxD, RsxE and RsxG. The cofactor is [4Fe-4S] cluster.

The protein resides in the cell inner membrane. Part of a membrane-bound complex that couples electron transfer with translocation of ions across the membrane. Required to maintain the reduced state of SoxR. This is Ion-translocating oxidoreductase complex subunit C from Shigella flexneri serotype 5b (strain 8401).